We begin with the raw amino-acid sequence, 238 residues long: tRNA (guanine-N(7)-)-methyltransferase (238 aa).

Residues Glu-68, Glu-93, Asp-120, and Asp-143 each contribute to the S-adenosyl-L-methionine site. Asp-143 is a catalytic residue. Residues Lys-147, Asp-179, and 216–219 contribute to the substrate site; that span reads TKFE.

Belongs to the class I-like SAM-binding methyltransferase superfamily. TrmB family.

The catalysed reaction is guanosine(46) in tRNA + S-adenosyl-L-methionine = N(7)-methylguanosine(46) in tRNA + S-adenosyl-L-homocysteine. It functions in the pathway tRNA modification; N(7)-methylguanine-tRNA biosynthesis. Functionally, catalyzes the formation of N(7)-methylguanine at position 46 (m7G46) in tRNA. The chain is tRNA (guanine-N(7)-)-methyltransferase from Ectopseudomonas mendocina (strain ymp) (Pseudomonas mendocina).